A 1034-amino-acid chain; its full sequence is Potassium-transporting ATPase alpha chain 1 (1034 aa).

The Cytoplasmic portion of the chain corresponds to 2–97 (GKAENYELYQ…NALRPPRGTP (96 aa)). Tyrosine 7 and tyrosine 10 each carry phosphotyrosine. The tract at residues 13 to 40 (ELGPGPSGDMAAKMSKKKAGRGGGKRKE) is disordered. Residues 26–39 (MSKKKAGRGGGKRK) show a composition bias toward basic residues. Serine 27 carries the phosphoserine; by PKA and PKC modification. Residues 98–118 (EYVKFARQLAGGLQCLMWVAA) form a helical membrane-spanning segment. Topologically, residues 119–141 (AICLIAFAIQASEGDLTTDDNLY) are lumenal. Residues 142–162 (LALALIAVVVVTGCFGYYQEF) traverse the membrane as a helical segment. The Cytoplasmic segment spans residues 163-298 (KSTNIIASFK…NEKTPIAIEI (136 aa)). Residues 222–244 (KVDNSSLTGESEPQTRSPECTHE) are disordered. Polar residues predominate over residues 225–239 (NSSLTGESEPQTRSP). A helical transmembrane segment spans residues 299–318 (EHFVDIIAGLAILFGATFFI). The Lumenal segment spans residues 319 to 330 (VAMCIGYTFLRA). Residues 331–348 (MVFFMAIVVAYVPEGLLA) traverse the membrane as a helical segment. 4 residues coordinate K(+): valine 339, alanine 340, valine 342, and glutamate 344. The Cytoplasmic segment spans residues 349 to 782 (TVTVCLSLTA…EQGRLIFDNL (434 aa)). Aspartate 386 (4-aspartylphosphate intermediate) is an active-site residue. Mg(2+)-binding residues include aspartate 386 and threonine 388. 2 positions are modified to phosphoserine: serine 462 and serine 600. Residues aspartate 727 and aspartate 731 each contribute to the Mg(2+) site. A helical membrane pass occupies residues 783–802 (KKSIAYTLTKNIPELTPYLI). Residue glutamate 796 participates in K(+) binding. The Lumenal segment spans residues 803–812 (YITVSVPLPL). Residues 813 to 833 (GCITILFIELCTDIFPSVSLA) form a helical membrane-spanning segment. Glutamate 821 is a binding site for K(+). Residues 834–853 (YEKAESDIMHLRPRNPKRDR) are Cytoplasmic-facing. Position 839 is a phosphoserine (serine 839). A helical transmembrane segment spans residues 854 to 876 (LVNEPLAAYSYFQIGAIQSFAGF). Topologically, residues 877 to 928 (TDYFTAMAQEGWFPLLCVGLRPQWENHHLQDLQDSYGQEWTFGQRLYQQYTC) are lumenal. A helical membrane pass occupies residues 929-948 (YTVFFISIEMCQIADVLIRK). Topologically, residues 949-962 (TRRLSAFQQGFFRN) are cytoplasmic. At serine 953 the chain carries Phosphoserine; by PKA. A helical transmembrane segment spans residues 963-981 (RILVIAIVFQVCIGCFLCY). At 982–996 (CPGMPNIFNFMPIRF) the chain is on the lumenal side. The helical transmembrane segment at 997 to 1017 (QWWLVPMPFGLLIFVYDEIRK) threads the bilayer. The Cytoplasmic segment spans residues 1018–1034 (LGVRCCPGSWWDQELYY).

Belongs to the cation transport ATPase (P-type) (TC 3.A.3) family. Type IIC subfamily. In terms of assembly, the gastric H(+)/K(+) ATPase pump is composed of the catalytic alpha subunit ATP4A and the regulatory beta subunit ATP4B. Interacts (via the P-domain) with ATP4B (via N-terminus); this interaction stabilizes the lumenal-open E2 conformation state and prevents the reverse reaction of the transport cycle.

The protein resides in the apical cell membrane. It localises to the cell membrane. It catalyses the reaction K(+)(out) + ATP + H2O + H(+)(in) = K(+)(in) + ADP + phosphate + 2 H(+)(out). Down-regulated by K(+)-competitive acid blockers (P-CABs) such as vonoprazan. In terms of biological role, the catalytic subunit of the gastric H(+)/K(+) ATPase pump which transports H(+) ions in exchange for K(+) ions across the apical membrane of parietal cells. Uses ATP as an energy source to pump H(+) ions to the gastric lumen while transporting K(+) ion from the lumen into the cell. Remarkably generates a million-fold proton gradient across the gastric parietal cell membrane, acidifying the gastric juice down to pH 1. Within a transport cycle, the transfer of a H(+) ion across the membrane is coupled to ATP hydrolysis and is associated with a transient phosphorylation that shifts the pump conformation from inward-facing (E1) to outward-facing state (E2). The release of the H(+) ion in the stomach lumen is followed by binding of K(+) ion converting the pump conformation back to the E1 state. This is Potassium-transporting ATPase alpha chain 1 (ATP4A) from Sus scrofa (Pig).